Consider the following 351-residue polypeptide: DNA-directed RNA polymerase subunit alpha (351 aa).

Positions 1-236 (MSVNTKNWQE…DQLTLFVHFE (236 aa)) are alpha N-terminal domain (alpha-NTD). The tract at residues 256-351 (DDANQLNRYL…AKKLEQELLG (96 aa)) is alpha C-terminal domain (alpha-CTD).

The protein belongs to the RNA polymerase alpha chain family. In terms of assembly, homodimer. The RNAP catalytic core consists of 2 alpha, 1 beta, 1 beta' and 1 omega subunit. When a sigma factor is associated with the core the holoenzyme is formed, which can initiate transcription.

It carries out the reaction RNA(n) + a ribonucleoside 5'-triphosphate = RNA(n+1) + diphosphate. Its function is as follows. DNA-dependent RNA polymerase catalyzes the transcription of DNA into RNA using the four ribonucleoside triphosphates as substrates. The protein is DNA-directed RNA polymerase subunit alpha of Erythrobacter litoralis (strain HTCC2594).